The sequence spans 863 residues: DNA replication licensing factor MCM4 (863 aa).

Over residues 1 to 10 (MSSPASTPSR) the composition is skewed to low complexity. Disordered regions lie at residues 1–60 (MSSP…VDLQ) and 91–126 (TYGT…KGLQ). N-acetylserine is present on Ser-2. Ser-6 is modified (phosphoserine; by CDC7). A phosphothreonine mark is found at Thr-7 and Thr-19. 4 positions are modified to phosphoserine: Ser-26, Ser-31, Ser-32, and Ser-34. Thr-102 bears the Phosphothreonine mark. The residue at position 105 (Ser-105) is a Phosphoserine. At Thr-110 the chain carries Phosphothreonine. Ser-120, Ser-131, Ser-142, and Ser-145 each carry phosphoserine. Lys-220 carries the post-translational modification N6-acetyllysine. A Glycyl lysine isopeptide (Lys-Gly) (interchain with G-Cter in SUMO2) cross-link involves residue Lys-439. Lys-450 carries the N6-acetyllysine modification. The MCM domain occupies 458-667 (IYERLASALA…YDRRLAHHLV (210 aa)). ATP contacts are provided by Tyr-471, Arg-497, Lys-516, Ser-517, Asn-618, Arg-643, Arg-732, and Glu-735. Residues 642-645 (SRFD) carry the Arginine finger motif. Lys-798 participates in a covalent cross-link: Glycyl lysine isopeptide (Lys-Gly) (interchain with G-Cter in SUMO2). At Lys-858 the chain carries N6-acetyllysine.

It belongs to the MCM family. As to quaternary structure, component of the MCM2-7 complex. The complex forms a toroidal hexameric ring with the proposed subunit order MCM2-MCM6-MCM4-MCM7-MCM3-MCM5. Component of the CMG helicase complex, a hexameric ring of related MCM2-7 subunits stabilized by CDC45 and the tetrameric GINS complex. Interacts with MCMBP. In terms of processing, sumoylated; SUMO2 modified in response to stress caused by inhibition of proteasome activity (in vitro).

Its subcellular location is the nucleus. The protein resides in the chromosome. It carries out the reaction ATP + H2O = ADP + phosphate + H(+). Functionally, acts as a component of the MCM2-7 complex (MCM complex) which is the replicative helicase essential for 'once per cell cycle' DNA replication initiation and elongation in eukaryotic cells. Core component of CDC45-MCM-GINS (CMG) helicase, the molecular machine that unwinds template DNA during replication, and around which the replisome is built. The active ATPase sites in the MCM2-7 ring are formed through the interaction surfaces of two neighboring subunits such that a critical structure of a conserved arginine finger motif is provided in trans relative to the ATP-binding site of the Walker A box of the adjacent subunit. The six ATPase active sites, however, are likely to contribute differentially to the complex helicase activity. The chain is DNA replication licensing factor MCM4 from Homo sapiens (Human).